The following is a 1285-amino-acid chain: Nuclear pore complex protein NUP133 (1285 aa).

2 disordered regions span residues 1–53 (MFSP…PAPW) and 522–580 (EPPE…QTAR). Positions 31 to 41 (TPATQNRNNFI) are enriched in polar residues. 2 stretches are compositionally biased toward basic and acidic residues: residues 523–544 (PPER…DETR) and 553–569 (TAGR…DKGN).

Belongs to the nucleoporin Nup133 family. Part of the nuclear pore complex (NPC). The NPC has an eight-fold symmetrical structure comprising a central transport channel and two rings, the cytoplasmic and nuclear rings, to which eight filaments are attached. The cytoplasmic filaments have loose ends, while the nuclear filaments are joined in a distal ring, forming a nuclear basket. NPCs are highly dynamic in configuration and composition, and can be devided in 3 subcomplexes, the NUP62 subcomplex, the NUP107-160 subcomplex and the NUP93 subcomplex, containing approximately 30 different nucleoporin proteins.

It is found in the nucleus envelope. The protein resides in the nucleus. It localises to the nuclear pore complex. This Arabidopsis thaliana (Mouse-ear cress) protein is Nuclear pore complex protein NUP133.